Here is a 206-residue protein sequence, read N- to C-terminus: Inner membrane-spanning protein YciB (206 aa).

The next 5 membrane-spanning stretches (helical) occupy residues 50–70 (PILLATAIAIIATILQIGYLL), 78–98 (GTLWLSLAIIVFFGGATIYFH), 105–125 (WKPTVLYWCFAAALLFSQIFL), 150–170 (LSWVAFFITMGLLNLYVAFNF), and 173–193 (AAWVNFKLFGGMGLMFAFIII).

This sequence belongs to the YciB family.

It localises to the cell inner membrane. Its function is as follows. Plays a role in cell envelope biogenesis, maintenance of cell envelope integrity and membrane homeostasis. This chain is Inner membrane-spanning protein YciB, found in Herminiimonas arsenicoxydans.